A 73-amino-acid chain; its full sequence is Large ribosomal subunit protein bL31 (73 aa).

This sequence belongs to the bacterial ribosomal protein bL31 family. Type A subfamily. Part of the 50S ribosomal subunit.

Binds the 23S rRNA. The protein is Large ribosomal subunit protein bL31 of Paracoccus denitrificans (strain Pd 1222).